A 1650-amino-acid polypeptide reads, in one-letter code: Transmembrane domain-containing protein DDB_G0287209 (1650 aa).

Positions 194-225 (NNNNNNFNNNNNNNNNNNNNKNNYNNNKSNLI) form a coiled coil. 2 disordered regions span residues 197–216 (NNNF…NKNN) and 1218–1296 (ENQF…NINN). The span at 1224–1284 (NNNENSGSSG…SNSNENNYNG (61 aa)) shows a compositional bias: low complexity. The next 9 helical transmembrane spans lie at 1314 to 1334 (PLLL…LSLF), 1347 to 1369 (ILFL…LQLF), 1390 to 1410 (ISIS…DVTS), 1454 to 1474 (WNIY…LIVP), 1489 to 1509 (ILFI…VILF), 1515 to 1535 (WWDL…VTLL), 1539 to 1559 (PVYF…QFAF), 1570 to 1590 (VENL…TSII), and 1595 to 1615 (FNLI…ITII).

It is found in the membrane. This is Transmembrane domain-containing protein DDB_G0287209 from Dictyostelium discoideum (Social amoeba).